Consider the following 1134-residue polypeptide: Spermatogenesis-associated protein 31C2 (1134 aa).

The helical transmembrane segment at 23 to 43 threads the bilayer; that stretch reads PWVLDIFLTLVFALGFFFLLL. 7 disordered regions span residues 54-87, 115-243, 477-504, 524-561, 727-807, 928-1007, and 1111-1134; these read PPSPSPKKRKRHLVSQRPAGRRGRPRGRMKNHSL, LEKG…LLTP, PGTSQAKGKPRPWQSSTSTGESSKEAQT, TPQNLSRGMESFPGKVLGATSEESERNLRKPLRSDSGS, MPER…PTVP, NMGH…PSIS, and AASSQQATLKNQSRPNRDRQIRDQ. The segment covering 59–87 has biased composition (basic residues); it reads PKKRKRHLVSQRPAGRRGRPRGRMKNHSL. Residues 132 to 148 are compositionally biased toward basic and acidic residues; the sequence is VGKRTPDGASRSSHEPT. The span at 185–201 shows a compositional bias: low complexity; sequence SSLSASQPPEPSLLLEH. Residues 204–235 are compositionally biased toward pro residues; that stretch reads PEPPALFPHPPRTPDPLACSPPPPKGFTPPPL. Polar residues predominate over residues 489–504; the sequence is WQSSTSTGESSKEAQT. 2 stretches are compositionally biased toward polar residues: residues 773 to 794 and 937 to 948; these read LTYSLTGSTQQSRSLGAQSSRA and PNCQGSCKSQSP. A compositionally biased stretch (basic and acidic residues) spans 954 to 970; the sequence is HKRENSRKPNLEKHEEM. Polar residues predominate over residues 1111 to 1124; the sequence is AASSQQATLKNQSR. Positions 1125 to 1134 are enriched in basic and acidic residues; sequence PNRDRQIRDQ.

It belongs to the SPATA31 family.

It is found in the membrane. In terms of biological role, may play a role in spermatogenesis. This Homo sapiens (Human) protein is Spermatogenesis-associated protein 31C2 (SPATA31C2).